Reading from the N-terminus, the 388-residue chain is MINYPLASSTWDDLEYKAIQSVLDSKMFTMGEYVKQYETQFAKTFGSKYAVMVSSGSTANLLMIAALFFTKKPRLKKGDEIIVPAVSWSTTYYPLQQYGLRVKFVDIDINTLNIDIESLKEAVTDSTKAILTVNLLGNPNNFDEINKIIGGRDIILLEDNCESMGATFNNKCAGTFGLMGTFSSFYSHHIATMEGGCIVTDDEEIYHILLCIRAHGWTRNLPKKNKVTGVKSDDQFEESFKFVLPGYNVRPLEMSGAIGIEQLKKLPRFISVRRKNAEYFLDKFKDHPYLDVQQETGESSWFGFSFIIKKDSGVIRKQLVENLNSAGIECRPIVTGNFLKNTDVLKYFDYTVHNNVDNAEYLDKNGLFVGNHQIELFDEIDYLREVLK.

Residue 26-29 (KMFT) participates in GDP-4-dehydro-alpha-D-rhamnose binding. The chain crosses the membrane as a helical span at residues 49-69 (YAVMVSSGSTANLLMIAALFF). Pyridoxal 5'-phosphate-binding positions include 56–57 (GS), tryptophan 88, glutamate 162, and serine 183. Histidine 188 acts as the Proton donor/acceptor in catalysis. Histidine 215 contacts L-glutamate. Arginine 219 lines the GDP-4-dehydro-alpha-D-rhamnose pocket. Position 248 (asparagine 248) interacts with pyridoxal 5'-phosphate. Position 250 (arginine 250) interacts with L-glutamate. Glutamate 329 is a binding site for GDP-4-dehydro-alpha-D-rhamnose.

The protein belongs to the DegT/DnrJ/EryC1 family. In terms of assembly, homodimer. Requires pyridoxal 5'-phosphate as cofactor.

The protein resides in the cell membrane. It catalyses the reaction GDP-4-dehydro-alpha-D-rhamnose + L-glutamate = GDP-4-dehydro-3,6-dideoxy-alpha-D-mannose + 2-oxoglutarate + NH4(+). Its pathway is nucleotide-sugar metabolism; GDP-L-colitose biosynthesis. In terms of biological role, involved in the biosynthesis of L-colitose, a 3,6-dideoxyhexose present in the O-antigen region of lipopolysaccharides (LPS), where it serves as an antigenic determinant and is vital for bacterial defense and survival. Catalyzes the removal of the C3'-hydroxyl group from GDP-4-keto-6-deoxy-D-mannose via a combined transamination-deoxygenation reaction. The catalysis is initiated by a transamination step in which pyridoxal 5'-phosphate (PLP) is converted to pyridoxamine 5'-phosphate (PMP) in the presence of L-glutamate. This coenzyme then forms a Schiff base with GDP-4-keto-6-deoxy-D-mannose and the resulting adduct undergoes a PMP-mediated beta-dehydration reaction to give a sugar enamine intermediate, which after tautomerization and hydrolysis to release ammonia yields GDP-4-keto-3,6-dideoxy-D-mannose as a product. In vitro, is able to catalyze the formation of GDP-4-keto-3,6-dideoxymannose using GDP-perosamine rather than GDP-4-keto-6-deoxymannose as a substrate, with no need of glutamate. In Escherichia coli O55:H7 (strain CB9615 / EPEC), this protein is GDP-4-keto-6-deoxy-D-mannose 3-dehydratase.